We begin with the raw amino-acid sequence, 479 residues long: 3-phytase B (479 aa).

The N-terminal stretch at 1-19 (MPRTSLLTLACALATGASA) is a signal peptide. Intrachain disulfides connect Cys71/Cys387, Cys128/Cys472, Cys216/Cys441, Cys225/Cys298, and Cys413/Cys421. Residue His82 is the Nucleophile of the active site. N-linked (GlcNAc...) asparagine glycosylation is present at Asn191. N-linked (GlcNAc...) asparagine glycosylation is present at Asn315. Asp338 (proton donor) is an active-site residue. Residue Asn458 is glycosylated (N-linked (GlcNAc...) asparagine).

It belongs to the histidine acid phosphatase family. Homodimer.

It carries out the reaction 1D-myo-inositol hexakisphosphate + H2O = 1D-myo-inositol 1,2,4,5,6-pentakisphosphate + phosphate. Catalyzes the hydrolysis of inorganic orthophosphate from phytate. This is 3-phytase B (phyB) from Aspergillus awamori (Black koji mold).